Here is a 538-residue protein sequence, read N- to C-terminus: Atos homolog protein B (538 aa).

Residues 1 to 18 (MRHVQAEPSPSSEPEAGP) are compositionally biased toward low complexity. Disordered stretches follow at residues 1-103 (MRHV…GLLG), 156-185 (HTRD…QLHT), and 197-308 (GGKS…PMGR). Over residues 227 to 238 (HTPPGPGPPGPC) the composition is skewed to pro residues. 2 positions are modified to phosphoserine: Ser254 and Ser255. Positions 274 to 286 (AANSSDAKATSFW) are enriched in polar residues. Positions 348–430 (LLGNFEESLL…VPKVGTVQVT (83 aa)) are required for macropage invasion. Positions 436–444 (QTVVKMFLV) are transactivation domain 1 (TAD1).

It belongs to the ATOS family.

It localises to the nucleus. Functionally, transcription regulator that may syncronize transcriptional and translational programs. The polypeptide is Atos homolog protein B (Macaca fascicularis (Crab-eating macaque)).